The sequence spans 205 residues: 5'-deoxynucleotidase HDDC2 (205 aa).

A2 carries the N-acetylalanine modification. A phosphoserine mark is found at S3 and S5. The HD domain occupies 47 to 149 (VSDHMYRMAV…VKQLDQCEMI (103 aa)). A divalent metal cation is bound by residues H50, H78, D79, E82, D87, I88, and D144. S205 is modified (phosphoserine).

This sequence belongs to the HDDC2 family. As to quaternary structure, homodimer. Mn(2+) serves as cofactor. The cofactor is Co(2+). Requires Mg(2+) as cofactor.

The enzyme catalyses a 2'-deoxyribonucleoside 5'-phosphate + H2O = a 2'-deoxyribonucleoside + phosphate. Functionally, catalyzes the dephosphorylation of the nucleoside 5'-monophosphates deoxyadenosine monophosphate (dAMP), deoxycytidine monophosphate (dCMP), deoxyguanosine monophosphate (dGMP) and deoxythymidine monophosphate (dTMP). The sequence is that of 5'-deoxynucleotidase HDDC2 (HDDC2) from Bos taurus (Bovine).